The following is a 624-amino-acid chain: Ceramide transfer protein (624 aa).

Residues 1 to 11 (MSDNQSWNSSG) are compositionally biased toward polar residues. Positions 1 to 24 (MSDNQSWNSSGSEEDPETESGPPV) are disordered. One can recognise a PH domain in the interval 23-117 (PVERCGVLSK…WIDAIEQHKT (95 aa)). Ser-126 carries the phosphoserine modification. Ser-132 carries the phosphoserine; by PKD modification. Ser-135 is subject to Phosphoserine. Residues 263–303 (IELMVKREDSWQKRLDKETEKKRRTEEAYKNAMTELKKKSH) adopt a coiled-coil conformation. Ser-315 carries the phosphoserine modification. An FFAT motif is present at residues 321–327 (EFFDAVE). Tyr-372 carries the post-translational modification Phosphotyrosine. A phosphoserine mark is found at Ser-373, Ser-377, and Ser-380. The START domain maps to 389–618 (DVHRFSSQVE…FTSYVQEKTA (230 aa)). Positions 472, 493, 530, and 579 each coordinate an N-acylsphing-4-enine.

Interacts with VAPA and VAPB. Interaction with VAPB is less efficient than with VAPA. Interacts (via FFAT motif) with the MOSPD2 (via MSP domain). In terms of processing, phosphorylation on Ser-132 decreases the affinity toward phosphatidylinositol 4-phosphate at Golgi membranes and reduces ceramide transfer activity. Inactivated by hyperphosphorylation of serine residues by CSNK1G2/CK1 that triggers dissociation from the Golgi complex, thus down-regulating ER-to-Golgi transport of ceramide and sphingomyelin synthesis.

Its subcellular location is the cytoplasm. It localises to the golgi apparatus. The protein localises to the endoplasmic reticulum. It carries out the reaction N-hexadecanoylsphing-4-enine(in) = N-hexadecanoylsphing-4-enine(out). In terms of biological role, shelters ceramides and diacylglycerol lipids inside its START domain and mediates the intracellular trafficking of ceramides and diacylglycerol lipids in a non-vesicular manner. The polypeptide is Ceramide transfer protein (CERT1) (Pongo abelii (Sumatran orangutan)).